Here is a 358-residue protein sequence, read N- to C-terminus: Bis(monoacylglycero)phosphate synthase CLN5 (358 aa).

The Cytoplasmic segment spans residues 1–23 (MAQEVDTAQGAEMRRGAGAARGR). The chain crosses the membrane as a helical; Signal-anchor for type II membrane protein span at residues 24 to 40 (ASWCWALALLWLAVVPG). Topologically, residues 41–358 (WSRVSGIPSR…PIRNKTLSGL (318 aa)) are lumenal. 2 disulfides stabilise this stretch: Cys70–Cys159 and Cys77–Cys165. His117 serves as the catalytic Proton acceptor. Residues Asn130, Asn143, Asn178, and Asn203 are each glycosylated (N-linked (GlcNAc...) asparagine). The Nucleophile; Acyl-thioester intermediate role is filled by Cys231. Asn255, Asn271, and Asn281 each carry an N-linked (GlcNAc...) asparagine glycan. Residues 304-343 (FLLSLLQIFDAVIVHKQFYLFYNFEYWFLPMKFPFIKITY) form a membrane-anchoring region. Asn352 carries N-linked (GlcNAc...) asparagine glycosylation.

This sequence belongs to the CLN5 family. Multimer. Interacts with SORT1, RAB5A and RAB7A. Interacts with PPT1, TPP1, CLN3, CLN6, CLN8, ATP5F1A and ATP5F1B. N-glycosylated with both high mannose and complex type sugars. Glycosylation is important for proper folding and trafficking to the lysosomes. Post-translationally, the type II membrane signal anchor is proteolytically cleaved to produce a mature form that is transported to the lysosomes (Bis(monoacylglycero)phosphate synthase CLN5, secreted form). In terms of processing, can undergo proteolytic cleavage at the C-terminus, probably by a cysteine protease and may involve the removal of approximately 10-15 residues from the C-terminal end. In terms of tissue distribution, ubiquitous.

The protein resides in the lysosome. The protein localises to the membrane. It carries out the reaction S-hexadecanoyl-L-cysteinyl-[protein] + H2O = L-cysteinyl-[protein] + hexadecanoate + H(+). The enzyme catalyses 2 1-acyl-sn-glycero-3-phospho-(1'-sn-glycerol) = 1-acyl-sn-glycero-3-phospho-(3'-acyl-sn-1'-glycerol) + sn-glycero-3-phospho-(1'-sn-glycerol). It catalyses the reaction 2 1-(9Z-octadecenoyl)-sn-glycero-3-phospho-(1'-sn-glycerol) = 1-(9Z-octadecenoyl)-sn-glycero-3-phospho-(3'-(9Z-octadecenoyl)-1'-sn-glycerol) + sn-glycero-3-phospho-(1'-sn-glycerol). The catalysed reaction is 2 1-octadecanoyl-sn-glycero-3-phospho-(1'-sn-glycerol) = 1-octadecanoyl-sn-glycero-3-phospho-(3'-octadecanoyl-1'-sn-glycerol) + sn-glycero-3-phospho-(1'-sn-glycerol). It carries out the reaction 2 1-hexadecanoyl-sn-glycero-3-phospho-(1'-sn-glycerol) = 1-hexadecanoyl-sn-glycero-3-phospho-(3'-hexadecanoyl-1'-sn-glycerol) + sn-glycero-3-phospho-(1'-sn-glycerol). The enzyme catalyses 2 1-tetradecanoyl-sn-glycero-3-phospho-(1'-sn-glycerol) = 1-tetradecanoyl-sn-glycero-3-phospho-(3'-tetradecanoyl-1'-sn-glycerol) + sn-glycero-3-phospho-(1'-sn-glycerol). Anionic phospholipids activate bis(monoacylglycero)phosphate (BMP) synthase activity. Amiodarone, a cationic amphiphilic drug inhibits BMP synthase activity towards liposomal lysophosphatidylglycerol. Palmostatin B inhibits palmitoyl protein thioesterase activity. Catalyzes the synthesis of bis(monoacylglycero)phosphate (BMP) via transacylation of 2 molecules of lysophosphatidylglycerol (LPG). BMP also known as lysobisphosphatidic acid plays a key role in the formation of intraluminal vesicles and in maintaining intracellular cholesterol homeostasis. Can use only LPG as the exclusive lysophospholipid acyl donor for base exchange and displays BMP synthase activity towards various LPGs (LPG 14:0, LPG 16:0, LPG 18:0, LPG 18:1) with a higher preference for longer chain lengths. Plays a role in influencing the retrograde trafficking of lysosomal sorting receptors SORT1 and IGF2R from the endosomes to the trans-Golgi network by controlling the recruitment of retromer complex to the endosomal membrane. Regulates the localization and activation of RAB7A which is required to recruit the retromer complex to the endosomal membrane. Its function is as follows. Exhibits palmitoyl protein thioesterase (S-depalmitoylation) activity in vitro and most likely plays a role in protein S-depalmitoylation. The sequence is that of Bis(monoacylglycero)phosphate synthase CLN5 (CLN5) from Homo sapiens (Human).